A 196-amino-acid chain; its full sequence is Probable malonic semialdehyde reductase RutE (196 aa).

The protein belongs to the nitroreductase family. HadB/RutE subfamily. The cofactor is FMN.

It carries out the reaction 3-hydroxypropanoate + NADP(+) = 3-oxopropanoate + NADPH + H(+). Functionally, may reduce toxic product malonic semialdehyde to 3-hydroxypropionic acid, which is excreted. This is Probable malonic semialdehyde reductase RutE from Escherichia coli O6:H1 (strain CFT073 / ATCC 700928 / UPEC).